The primary structure comprises 362 residues: MLKVGSSLLAADGGGLSPRFALGLAQFVSANLAAGRELVIVSSGAVAAGRAILPKAADVGAPIAARQALAALGQAQLIALWQRFFERPVAQVLLTHDDLRNRRRYLNARATLGELLRLGALPVINENDTVSVDELKLGDNDNLAAIVAALVDADALFIATDIDGLYSADPRSNPLARPLDDVPELTPEVLAMAGGSGSNVGTGGMRTKLEAAAKAGAAGIETYLFNGRSGEVVRALAQDRLRGTRIHAARARIAARKYWLRHAPVEAGAILIDDGAAAALTGKGASLLPGGVAGAQGDFRRGDMVEIRLRDTAGDQCLARGVSQYSALDIRRIAGRHSREIENVLGYSYGENVVHRDDLVVL.

Lys3 contacts ATP. The substrate site is built by Ser43, Asp128, and Asn140. ATP contacts are provided by residues 160–161 and 202–208; these read TD and TGGMRTK. Residues 267–348 form the PUA domain; it reads AGAILIDDGA…REIENVLGYS (82 aa).

This sequence belongs to the glutamate 5-kinase family.

It localises to the cytoplasm. It catalyses the reaction L-glutamate + ATP = L-glutamyl 5-phosphate + ADP. Its pathway is amino-acid biosynthesis; L-proline biosynthesis; L-glutamate 5-semialdehyde from L-glutamate: step 1/2. Functionally, catalyzes the transfer of a phosphate group to glutamate to form L-glutamate 5-phosphate. The polypeptide is Glutamate 5-kinase (Xanthomonas euvesicatoria pv. vesicatoria (strain 85-10) (Xanthomonas campestris pv. vesicatoria)).